Consider the following 828-residue polypeptide: Outer membrane usher protein MrkC (828 aa).

An N-terminal signal peptide occupies residues 1 to 18; it reads MKQRSICPGRLSTAIAVA. Cysteines 813 and 827 form a disulfide.

It belongs to the fimbrial export usher family.

The protein resides in the cell outer membrane. In terms of biological role, involved in the export and assembly of the type 3 fimbrial subunit (MrkA). The chain is Outer membrane usher protein MrkC (mrkC) from Klebsiella pneumoniae.